A 274-amino-acid polypeptide reads, in one-letter code: Syntaxin-12 (274 aa).

Disordered regions lie at residues 1–20 and 128–147; these read MSYGPLDMYRNPGPSGPQPR and EKESIARARAGSRLSAEDRQ. The residue at position 2 (S2) is an N-acetylserine. At 2-250 the chain is on the cytoplasmic side; the sequence is SYGPLDMYRN…AYYQKKSRKK (249 aa). Residues 33 to 130 adopt a coiled-coil conformation; it reads IQRISQATAQ…QRKVSEKEKE (98 aa). A phosphoserine mark is found at S139, S142, S218, and S225. The 63-residue stretch at 178 to 240 folds into the t-SNARE coiled-coil homology domain; sequence LELIKERETA…ERATDQLQRA (63 aa). A helical; Anchor for type IV membrane protein transmembrane segment spans residues 251–271; that stretch reads MCILVLVLSVIVTVLVVVIWV. Residues 272-274 lie on the Vesicular side of the membrane; sequence ASK.

Belongs to the syntaxin family. As to quaternary structure, associates with the BLOC-1 complex. Interacts with BLOC1S6. Interacts with NAPA and SNAP23. Identified in a complex containing STX6, STX12, VAMP4 and VTI1A. Interacts with GRIPAP1. Forms a complex with GRIP1, GRIA2 and NSG1; controls the intracellular fate of AMPAR and the endosomal sorting of the GRIA2 subunit toward recycling and membrane targeting. Interacts with NSG1. Interacts with TPC1. Interacts (via N-terminus) with VPS13B.

The protein localises to the endosome membrane. Its subcellular location is the golgi apparatus membrane. The protein resides in the endomembrane system. It is found in the early endosome membrane. It localises to the recycling endosome membrane. SNARE promoting fusion of transport vesicles with target membranes. Together with SNARE STX6, promotes movement of vesicles from endosomes to the cell membrane, and may therefore function in the endocytic recycling pathway. Through complex formation with GRIP1, GRIA2 and NSG1 controls the intracellular fate of AMPAR and the endosomal sorting of the GRIA2 subunit toward recycling and membrane targeting. This chain is Syntaxin-12 (Stx12), found in Mus musculus (Mouse).